Here is a 90-residue protein sequence, read N- to C-terminus: Small ribosomal subunit protein uS15c (90 aa).

Belongs to the universal ribosomal protein uS15 family. Part of the 30S ribosomal subunit.

The protein resides in the plastid. It localises to the chloroplast. The polypeptide is Small ribosomal subunit protein uS15c (rps15) (Gossypium barbadense (Sea Island cotton)).